A 639-amino-acid polypeptide reads, in one-letter code: Altered inheritance of mitochondria protein 9, mitochondrial (639 aa).

The transit peptide at 1–45 (MLMSKAPKLGNLLSKNSIKIVSGSKLRCNLKYINVRYISDTPDKV) directs the protein to the mitochondrion. A disordered region spans residues 619–639 (VSSEAQSEVQSEVQSSTENKD).

This sequence belongs to the AIM9 family.

The protein resides in the mitochondrion. The sequence is that of Altered inheritance of mitochondria protein 9, mitochondrial (AIM9) from Vanderwaltozyma polyspora (strain ATCC 22028 / DSM 70294 / BCRC 21397 / CBS 2163 / NBRC 10782 / NRRL Y-8283 / UCD 57-17) (Kluyveromyces polysporus).